The following is a 304-amino-acid chain: Syntaxin-132 (304 aa).

Met-1 bears the N-acetylmethionine mark. A disordered region spans residues 1-30 (MNDLLKGSFELPRGQSSREGDVELGEQQGG). Over 1–275 (MNDLLKGSFE…AKSLQKNSRK (275 aa)) the chain is Cytoplasmic. Coiled coils occupy residues 34–67 (LEDF…ESKS) and 129–162 (TLSL…DRRV). One can recognise a t-SNARE coiled-coil homology domain in the interval 204–266 (LAEIQERHDA…QSGNTALQRA (63 aa)). Residues 276–296 (WMCIAIIILLIVVAVIVVGVL) form a helical; Anchor for type IV membrane protein membrane-spanning segment. Residues 297 to 304 (KPWKNKSA) are Vesicular-facing.

The protein belongs to the syntaxin family. In terms of assembly, part of the t-SNARE complex. As to expression, widely expressed in all tissues throughout plant development.

It is found in the cell membrane. Functionally, vesicle trafficking protein that functions in the secretory pathway. Acts in coordination with SYP123 to mediate tip-focused membrane trafficking for root hair tip growth. Functions in root hair elongation by forming SNARE complexes with VAMP721,VAMP722 or VAMP724. Involved in cytokinesis. Acts as a cell plate-specific syntaxin, required for the fusion of vesicles at the plane of cell division. Required for secretory trafficking to the plasma membrane during interphase. Involved in the regulation of density of the H(+) ATPase proteins at the plasma membrane of root and shoot in epidermal cells. Modulation of SYP132 expression by auxin affects clathrin-sensitive H(+) ATPase traffic from the plasma membrane, and influences apoplastic acidification and plant growth. The chain is Syntaxin-132 from Arabidopsis thaliana (Mouse-ear cress).